A 351-amino-acid chain; its full sequence is Histidinol-phosphate aminotransferase (351 aa).

Lys213 carries the N6-(pyridoxal phosphate)lysine modification.

This sequence belongs to the class-II pyridoxal-phosphate-dependent aminotransferase family. Histidinol-phosphate aminotransferase subfamily. In terms of assembly, homodimer. Requires pyridoxal 5'-phosphate as cofactor.

It carries out the reaction L-histidinol phosphate + 2-oxoglutarate = 3-(imidazol-4-yl)-2-oxopropyl phosphate + L-glutamate. It functions in the pathway amino-acid biosynthesis; L-histidine biosynthesis; L-histidine from 5-phospho-alpha-D-ribose 1-diphosphate: step 7/9. This Clostridium kluyveri (strain NBRC 12016) protein is Histidinol-phosphate aminotransferase.